Here is a 158-residue protein sequence, read N- to C-terminus: NAD(P)H-quinone oxidoreductase subunit J, chloroplastic (158 aa).

Belongs to the complex I 30 kDa subunit family. In terms of assembly, NDH is composed of at least 16 different subunits, 5 of which are encoded in the nucleus.

The protein localises to the plastid. Its subcellular location is the chloroplast thylakoid membrane. The enzyme catalyses a plastoquinone + NADH + (n+1) H(+)(in) = a plastoquinol + NAD(+) + n H(+)(out). It carries out the reaction a plastoquinone + NADPH + (n+1) H(+)(in) = a plastoquinol + NADP(+) + n H(+)(out). NDH shuttles electrons from NAD(P)H:plastoquinone, via FMN and iron-sulfur (Fe-S) centers, to quinones in the photosynthetic chain and possibly in a chloroplast respiratory chain. The immediate electron acceptor for the enzyme in this species is believed to be plastoquinone. Couples the redox reaction to proton translocation, and thus conserves the redox energy in a proton gradient. This chain is NAD(P)H-quinone oxidoreductase subunit J, chloroplastic, found in Cryptomeria japonica (Japanese cedar).